The sequence spans 374 residues: Alanine racemase (374 aa).

The active-site Proton acceptor; specific for D-alanine is Lys34. N6-(pyridoxal phosphate)lysine is present on Lys34. A substrate-binding site is contributed by Arg138. Tyr265 serves as the catalytic Proton acceptor; specific for L-alanine. Met313 contributes to the substrate binding site.

Belongs to the alanine racemase family. Pyridoxal 5'-phosphate is required as a cofactor.

The catalysed reaction is L-alanine = D-alanine. The protein operates within amino-acid biosynthesis; D-alanine biosynthesis; D-alanine from L-alanine: step 1/1. Its function is as follows. Catalyzes the interconversion of L-alanine and D-alanine. May also act on other amino acids. The protein is Alanine racemase (alr) of Hahella chejuensis (strain KCTC 2396).